The sequence spans 252 residues: UPF0246 protein Fjoh_4905 (252 aa).

Belongs to the UPF0246 family.

This Flavobacterium johnsoniae (strain ATCC 17061 / DSM 2064 / JCM 8514 / BCRC 14874 / CCUG 350202 / NBRC 14942 / NCIMB 11054 / UW101) (Cytophaga johnsonae) protein is UPF0246 protein Fjoh_4905.